A 448-amino-acid chain; its full sequence is Fibulin-5 (448 aa).

An N-terminal signal peptide occupies residues 1 to 23; sequence MPGLKRILTVTILALWLPHPGNA. In terms of domain architecture, EGF-like 1; calcium-binding spans 42–82; sequence DIDECRTIPEACRGDMMCVNQNGGYLCIPRTNPVYRGPYSN. 17 disulfide bridges follow: cysteine 46–cysteine 59, cysteine 53–cysteine 68, cysteine 131–cysteine 144, cysteine 138–cysteine 153, cysteine 155–cysteine 166, cysteine 172–cysteine 181, cysteine 177–cysteine 190, cysteine 192–cysteine 205, cysteine 211–cysteine 221, cysteine 217–cysteine 230, cysteine 232–cysteine 245, cysteine 251–cysteine 262, cysteine 258–cysteine 271, cysteine 273–cysteine 286, cysteine 292–cysteine 305, cysteine 299–cysteine 314, and cysteine 320–cysteine 332. The Cell attachment site motif lies at 54–56; it reads RGD. An EGF-like 2; calcium-binding domain is found at 127-167; sequence DVDECATDSHQCNPTQICINTEGGYTCSCTDGYWLLEGQCL. The 39-residue stretch at 168–206 folds into the EGF-like 3; calcium-binding domain; sequence DIDECRYGYCQQLCANVPGSYSCTCNPGFTLNDDGRSCQ. The EGF-like 4; calcium-binding domain maps to 207-246; that stretch reads DVNECETENPCVQTCVNTYGSFICRCDPGYELEEDGIHCS. The tract at residues 245-448 is interaction with LOXL1; the sequence is CSDMDECSFS…LRIYVSQYPF (204 aa). The 41-residue stretch at 247 to 287 folds into the EGF-like 5; calcium-binding domain; it reads DMDECSFSEFLCQHECVNQPGSYFCSCPPGYVLLDDNRSCQ. Asparagine 283 and asparagine 296 each carry an N-linked (GlcNAc...) asparagine glycan. Positions 288–333 constitute an EGF-like 6; calcium-binding domain; that stretch reads DINECEHRNHTCTSLQTCYNLQGGFKCIDPISCEEPYLLIGENRCM.

Belongs to the fibulin family. Homodimer. Monomer, homodimerizes in presence of Ca(2+). Interacts with ELN. Interacts (via N-terminus) with the integrins ITGAV/ITGB3, ITGAV/ITGB5 and ITGA9/ITGB1. Interacts with FBN1 (via N-terminal domain). Forms a ternary complex with ELN and FBN1. Interacts with EFEMP2 with moderate affinity. Interacts with LOXL1. Post-translationally, N-glycosylated.

Its subcellular location is the secreted. It localises to the extracellular space. The protein localises to the extracellular matrix. Functionally, essential for elastic fiber formation, is involved in the assembly of continuous elastin (ELN) polymer and promotes the interaction of microfibrils and ELN. Stabilizes and organizes elastic fibers in the skin, lung and vasculature. Promotes adhesion of endothelial cells through interaction of integrins and the RGD motif. Vascular ligand for integrin receptors which may play a role in vascular development and remodeling. May act as an adapter that mediates the interaction between FBN1 and ELN. In Mus musculus (Mouse), this protein is Fibulin-5 (Fbln5).